A 211-amino-acid polypeptide reads, in one-letter code: Ribosomal RNA small subunit methyltransferase G (211 aa).

S-adenosyl-L-methionine-binding positions include glycine 78, methionine 83, 129–130 (AE), and arginine 144.

It belongs to the methyltransferase superfamily. RNA methyltransferase RsmG family.

It is found in the cytoplasm. The enzyme catalyses guanosine(527) in 16S rRNA + S-adenosyl-L-methionine = N(7)-methylguanosine(527) in 16S rRNA + S-adenosyl-L-homocysteine. Functionally, specifically methylates the N7 position of guanine in position 527 of 16S rRNA. This Pseudomonas syringae pv. tomato (strain ATCC BAA-871 / DC3000) protein is Ribosomal RNA small subunit methyltransferase G.